Consider the following 287-residue polypeptide: ATP synthase gamma chain (287 aa).

Belongs to the ATPase gamma chain family. In terms of assembly, F-type ATPases have 2 components, CF(1) - the catalytic core - and CF(0) - the membrane proton channel. CF(1) has five subunits: alpha(3), beta(3), gamma(1), delta(1), epsilon(1). CF(0) has three main subunits: a, b and c.

It localises to the cell inner membrane. Functionally, produces ATP from ADP in the presence of a proton gradient across the membrane. The gamma chain is believed to be important in regulating ATPase activity and the flow of protons through the CF(0) complex. In Stenotrophomonas maltophilia (strain R551-3), this protein is ATP synthase gamma chain.